The following is a 555-amino-acid chain: Glutamine--tRNA ligase (555 aa).

Positions 34–44 match the 'HIGH' region motif; the sequence is PEPNGYLHIGH. ATP is bound by residues 35–37 and 41–47; these read EPN and HIGHAKS. The L-glutamine site is built by Asp67 and Tyr212. ATP contacts are provided by residues Thr231, 261-262, and 269-271; these read RL and MSK. The short motif at 268–272 is the 'KMSKS' region element; the sequence is VMSKR.

Belongs to the class-I aminoacyl-tRNA synthetase family. Monomer.

It localises to the cytoplasm. It catalyses the reaction tRNA(Gln) + L-glutamine + ATP = L-glutaminyl-tRNA(Gln) + AMP + diphosphate. The sequence is that of Glutamine--tRNA ligase from Cronobacter sakazakii (strain ATCC BAA-894) (Enterobacter sakazakii).